Reading from the N-terminus, the 304-residue chain is Olfactory receptor 4K13 (304 aa).

Residues 1-25 lie on the Extracellular side of the membrane; sequence MERANHSVVSEFILLGLSKSQNLQI. N-linked (GlcNAc...) asparagine glycosylation is present at N5. Residues 26-49 traverse the membrane as a helical segment; sequence LFFLGFSVVFVGIVLGNLLILVTV. At 50–57 the chain is on the cytoplasmic side; that stretch reads TFDSLLHT. A helical transmembrane segment spans residues 58–79; the sequence is PMYFLLSNLSCIDMILASFATP. The Extracellular segment spans residues 80 to 100; it reads KMIVDFLRERKTISWWGCYSQ. C97 and C189 are disulfide-bonded. A helical membrane pass occupies residues 101-120; the sequence is MFFMHLLGGSEMMLLVAMAI. Residues 121–139 lie on the Cytoplasmic side of the membrane; the sequence is DRYVAICKPLHYMTIMSPR. A helical transmembrane segment spans residues 140–158; sequence VLTGLLLSSYAVGFVHSSS. The Extracellular segment spans residues 159–195; it reads QMAFMLTLPFCGPNVIDSFFCDLPLVIKLACKDTYIL. A helical membrane pass occupies residues 196–219; the sequence is QLLVIADSGLLSLVCFLLLLVSYG. Residues 220 to 235 lie on the Cytoplasmic side of the membrane; that stretch reads VIIFSVRYRAASRSSK. A helical membrane pass occupies residues 236-258; sequence AFSTLSAHITVVTLFFAPCVFIY. Residues 259 to 269 are Extracellular-facing; the sequence is VWPFSRYSVDK. The chain crosses the membrane as a helical span at residues 270–289; that stretch reads ILSVFYTIFTPLLNPIIYTL. Over 290–304 the chain is Cytoplasmic; sequence RNQEVKAAIKKRLCI.

This sequence belongs to the G-protein coupled receptor 1 family.

Its subcellular location is the cell membrane. Its function is as follows. Odorant receptor. This Homo sapiens (Human) protein is Olfactory receptor 4K13 (OR4K13).